The primary structure comprises 641 residues: ATP-dependent DNA helicase PIF1 (641 aa).

The interval 1 to 180 is PINT; the sequence is MLSGIEAAAG…LVKRPVEPQA (180 aa). A phosphoserine mark is found at Ser27 and Ser151. Residues 167-641 form a hydrolyzes ATP in the presence of both magnesium and single-stranded DNA; weak activity in the presence of RNA or double-stranded DNA; No unwinding activity region; sequence PDTTLVKRPV…SDQENMDPIL (475 aa). The segment at 173–192 is disordered; sequence KRPVEPQAGAEPSTEAPRWP. 228–235 provides a ligand contact to ATP; sequence GSAGTGKS. Residues 577 to 596 mediate DNA binding; it reads QAYVALSRARSLQGLRVLDF. Positions 622 to 641 are disordered; sequence LESPDDDEAASDQENMDPIL. Residues 624 to 641 show a composition bias toward acidic residues; that stretch reads SPDDDEAASDQENMDPIL.

It belongs to the helicase family. PIF1 subfamily. As to quaternary structure, monomer. Interacts with telomerase. The cofactor is Mg(2+). In terms of tissue distribution, weak ubiquitous expression.

It localises to the nucleus. The protein resides in the mitochondrion. The enzyme catalyses Couples ATP hydrolysis with the unwinding of duplex DNA at the replication fork by translocating in the 5'-3' direction. This creates two antiparallel DNA single strands (ssDNA). The leading ssDNA polymer is the template for DNA polymerase III holoenzyme which synthesizes a continuous strand.. It catalyses the reaction ATP + H2O = ADP + phosphate + H(+). In terms of biological role, DNA-dependent ATPase and 5'-3' DNA helicase required for the maintenance of both mitochondrial and nuclear genome stability. Efficiently unwinds G-quadruplex (G4) DNA structures and forked RNA-DNA hybrids. Resolves G4 structures, preventing replication pausing and double-strand breaks (DSBs) at G4 motifs. Involved in the maintenance of telomeric DNA. Inhibits telomere elongation, de novo telomere formation and telomere addition to DSBs via catalytic inhibition of telomerase. Reduces the processivity of telomerase by displacing active telomerase from DNA ends. Releases telomerase by unwinding the short telomerase RNA/telomeric DNA hybrid that is the intermediate in the telomerase reaction. Possesses an intrinsic strand annealing activity. In Homo sapiens (Human), this protein is ATP-dependent DNA helicase PIF1.